The sequence spans 367 residues: Cell division protein FtsZ (367 aa).

Residues 17-21 (GGGSN), 104-106 (GTG), E135, K139, and D183 each bind GTP.

Belongs to the FtsZ family. In terms of assembly, homodimer. Polymerizes to form a dynamic ring structure in a strictly GTP-dependent manner. Interacts directly with several other division proteins.

The protein resides in the cytoplasm. Essential cell division protein that forms a contractile ring structure (Z ring) at the future cell division site. The regulation of the ring assembly controls the timing and the location of cell division. One of the functions of the FtsZ ring is to recruit other cell division proteins to the septum to produce a new cell wall between the dividing cells. Binds GTP and shows GTPase activity. The protein is Cell division protein FtsZ of Aquifex aeolicus (strain VF5).